Consider the following 564-residue polypeptide: Juvenile hormone esterase (564 aa).

Positions 1-19 are cleaved as a signal peptide; the sequence is MTSHVLALAFLLHACTALA. The N-linked (GlcNAc...) asparagine glycan is linked to asparagine 81. Cysteine 89 and cysteine 109 are joined by a disulfide. Residue asparagine 180 is glycosylated (N-linked (GlcNAc...) asparagine). The active-site Acyl-ester intermediate is serine 220. Glutamate 351 serves as the catalytic Charge relay system. N-linked (GlcNAc...) asparagine glycosylation occurs at asparagine 402. The Charge relay system role is filled by histidine 465. An N-linked (GlcNAc...) asparagine glycan is attached at asparagine 515.

This sequence belongs to the type-B carboxylesterase/lipase family.

The enzyme catalyses juvenile hormone I + H2O = juvenile hormone I carboxylate + methanol + H(+). It carries out the reaction juvenile hormone III + H2O = juvenile hormone III carboxylate + methanol + H(+). Its function is as follows. JH esterase plays a crucial role in the decrease of JH activity in lepidopteran insects, by hydrolyzing the methyl ester of JH. It is also involved in the transport of JH. The chain is Juvenile hormone esterase from Heliothis virescens (Tobacco budworm moth).